The chain runs to 168 residues: uncharacterized protein (168 aa).

The PfpI endopeptidase domain occupies 1–166 (MRVLILAENE…FCGELIKILK (166 aa)).

It belongs to the peptidase C56 family.

This is an uncharacterized protein from Archaeoglobus fulgidus (strain ATCC 49558 / DSM 4304 / JCM 9628 / NBRC 100126 / VC-16).